The primary structure comprises 469 residues: ATP synthase subunit beta (469 aa).

ATP is bound at residue 156–163 (GGAGVGKT).

The protein belongs to the ATPase alpha/beta chains family. F-type ATPases have 2 components, CF(1) - the catalytic core - and CF(0) - the membrane proton channel. CF(1) has five subunits: alpha(3), beta(3), gamma(1), delta(1), epsilon(1). CF(0) has three main subunits: a(1), b(2) and c(9-12). The alpha and beta chains form an alternating ring which encloses part of the gamma chain. CF(1) is attached to CF(0) by a central stalk formed by the gamma and epsilon chains, while a peripheral stalk is formed by the delta and b chains.

Its subcellular location is the cell membrane. The catalysed reaction is ATP + H2O + 4 H(+)(in) = ADP + phosphate + 5 H(+)(out). Produces ATP from ADP in the presence of a proton gradient across the membrane. The catalytic sites are hosted primarily by the beta subunits. This chain is ATP synthase subunit beta, found in Lactococcus lactis subsp. cremoris (strain SK11).